A 90-amino-acid chain; its full sequence is Sec-independent protein translocase protein TatA (90 aa).

Residues 1-21 form a helical membrane-spanning segment; the sequence is MGLPGGWELVLIVGVLVLLFG. Residues 42–60 show a composition bias toward basic and acidic residues; sequence EARGMKEDEEAAKREKQAK. The disordered stretch occupies residues 42–90; that stretch reads EARGMKEDEEAAKREKQAKSEPQQLTAGESSAPTVASPVEETQRNDSKK. A compositionally biased stretch (polar residues) spans 61 to 75; the sequence is SEPQQLTAGESSAPT.

Belongs to the TatA/E family. As to quaternary structure, the Tat system comprises two distinct complexes: a TatABC complex, containing multiple copies of TatA, TatB and TatC subunits, and a separate TatA complex, containing only TatA subunits. Substrates initially bind to the TatABC complex, which probably triggers association of the separate TatA complex to form the active translocon.

It is found in the cell membrane. Functionally, part of the twin-arginine translocation (Tat) system that transports large folded proteins containing a characteristic twin-arginine motif in their signal peptide across membranes. TatA could form the protein-conducting channel of the Tat system. In Saccharopolyspora erythraea (strain ATCC 11635 / DSM 40517 / JCM 4748 / NBRC 13426 / NCIMB 8594 / NRRL 2338), this protein is Sec-independent protein translocase protein TatA.